The chain runs to 194 residues: Lymphocyte antigen 6 complex locus protein G5b (194 aa).

An N-terminal signal peptide occupies residues 1 to 18 (MRARVLVGMLTMVGFAMG). The region spanning 26–118 (RTCHLCLLED…SAQHQSTLRG (93 aa)) is the UPAR/Ly6 domain. 5 disulfides stabilise this stretch: Cys-28-Cys-55, Cys-31-Cys-40, Cys-47-Cys-73, Cys-81-Cys-98, and Cys-99-Cys-104. Residue Asn-63 is glycosylated (N-linked (GlcNAc...) asparagine). Asn-141 is a glycosylation site (N-linked (GlcNAc...) asparagine).

As to quaternary structure, monomer. In terms of processing, N-glycosylated.

It localises to the secreted. The polypeptide is Lymphocyte antigen 6 complex locus protein G5b (Ly6g5b) (Mus musculus (Mouse)).